The chain runs to 535 residues: CTP synthase (535 aa).

The tract at residues M1–L267 is amidoligase domain. S13 is a CTP binding site. S13 is a binding site for UTP. S14 to I19 contributes to the ATP binding site. Residue Y54 coordinates L-glutamine. ATP is bound at residue D71. Mg(2+)-binding residues include D71 and E141. Residues D148–E150, K188–Q193, and K224 each bind CTP. UTP is bound by residues K188–Q193 and K224. An ATP-binding site is contributed by R240 to A242. Positions K292–S534 constitute a Glutamine amidotransferase type-1 domain. Position 354 (G354) interacts with L-glutamine. Residue C381 is the Nucleophile; for glutamine hydrolysis of the active site. Residues L382–Q385, E405, and R462 each bind L-glutamine. Catalysis depends on residues H507 and E509.

It belongs to the CTP synthase family. In terms of assembly, homotetramer.

The enzyme catalyses UTP + L-glutamine + ATP + H2O = CTP + L-glutamate + ADP + phosphate + 2 H(+). The catalysed reaction is L-glutamine + H2O = L-glutamate + NH4(+). It catalyses the reaction UTP + NH4(+) + ATP = CTP + ADP + phosphate + 2 H(+). The protein operates within pyrimidine metabolism; CTP biosynthesis via de novo pathway; CTP from UDP: step 2/2. Allosterically activated by GTP, when glutamine is the substrate; GTP has no effect on the reaction when ammonia is the substrate. The allosteric effector GTP functions by stabilizing the protein conformation that binds the tetrahedral intermediate(s) formed during glutamine hydrolysis. Inhibited by the product CTP, via allosteric rather than competitive inhibition. Functionally, catalyzes the ATP-dependent amination of UTP to CTP with either L-glutamine or ammonia as the source of nitrogen. Regulates intracellular CTP levels through interactions with the four ribonucleotide triphosphates. This Bacillus cereus (strain G9842) protein is CTP synthase.